Reading from the N-terminus, the 132-residue chain is D-ribose pyranase (132 aa).

H20 functions as the Proton donor in the catalytic mechanism. Substrate is bound by residues D28, H99, and 121-123; that span reads YSN.

It belongs to the RbsD / FucU family. RbsD subfamily. Homodecamer.

The protein localises to the cytoplasm. It catalyses the reaction beta-D-ribopyranose = beta-D-ribofuranose. Its pathway is carbohydrate metabolism; D-ribose degradation; D-ribose 5-phosphate from beta-D-ribopyranose: step 1/2. Functionally, catalyzes the interconversion of beta-pyran and beta-furan forms of D-ribose. The sequence is that of D-ribose pyranase from Lactococcus lactis subsp. cremoris (strain MG1363).